The primary structure comprises 260 residues: Hydroxyethylthiazole kinase (260 aa).

2 residues coordinate ATP: Arg126 and Ser172. Gly199 is a binding site for substrate.

Belongs to the Thz kinase family. Mg(2+) serves as cofactor.

It catalyses the reaction 5-(2-hydroxyethyl)-4-methylthiazole + ATP = 4-methyl-5-(2-phosphooxyethyl)-thiazole + ADP + H(+). Its pathway is cofactor biosynthesis; thiamine diphosphate biosynthesis; 4-methyl-5-(2-phosphoethyl)-thiazole from 5-(2-hydroxyethyl)-4-methylthiazole: step 1/1. Catalyzes the phosphorylation of the hydroxyl group of 4-methyl-5-beta-hydroxyethylthiazole (THZ). In Burkholderia thailandensis (strain ATCC 700388 / DSM 13276 / CCUG 48851 / CIP 106301 / E264), this protein is Hydroxyethylthiazole kinase.